Consider the following 214-residue polypeptide: Pyridoxine/pyridoxamine 5'-phosphate oxidase (214 aa).

Substrate-binding positions include 9 to 12 and Lys-67; that span reads RKNY. FMN contacts are provided by residues 62 to 67, 77 to 78, Lys-83, Lys-84, and Gln-106; these read RIVLLK and YT. Tyr-124, Arg-128, and Ser-132 together coordinate substrate. FMN-binding positions include 141–142 and Trp-186; that span reads QS. 192 to 194 provides a ligand contact to substrate; sequence RLH. Residue Arg-196 participates in FMN binding.

The protein belongs to the pyridoxamine 5'-phosphate oxidase family. As to quaternary structure, homodimer. FMN is required as a cofactor.

It catalyses the reaction pyridoxamine 5'-phosphate + O2 + H2O = pyridoxal 5'-phosphate + H2O2 + NH4(+). The catalysed reaction is pyridoxine 5'-phosphate + O2 = pyridoxal 5'-phosphate + H2O2. Its pathway is cofactor metabolism; pyridoxal 5'-phosphate salvage; pyridoxal 5'-phosphate from pyridoxamine 5'-phosphate: step 1/1. It functions in the pathway cofactor metabolism; pyridoxal 5'-phosphate salvage; pyridoxal 5'-phosphate from pyridoxine 5'-phosphate: step 1/1. Its function is as follows. Catalyzes the oxidation of either pyridoxine 5'-phosphate (PNP) or pyridoxamine 5'-phosphate (PMP) into pyridoxal 5'-phosphate (PLP). This chain is Pyridoxine/pyridoxamine 5'-phosphate oxidase, found in Leptospira borgpetersenii serovar Hardjo-bovis (strain JB197).